A 409-amino-acid polypeptide reads, in one-letter code: Phosphopentomutase (409 aa).

Mn(2+)-binding residues include Asp-10, Asp-308, His-313, Asp-349, His-350, and His-361.

This sequence belongs to the phosphopentomutase family. It depends on Mn(2+) as a cofactor.

It localises to the cytoplasm. It catalyses the reaction 2-deoxy-alpha-D-ribose 1-phosphate = 2-deoxy-D-ribose 5-phosphate. The catalysed reaction is alpha-D-ribose 1-phosphate = D-ribose 5-phosphate. It participates in carbohydrate degradation; 2-deoxy-D-ribose 1-phosphate degradation; D-glyceraldehyde 3-phosphate and acetaldehyde from 2-deoxy-alpha-D-ribose 1-phosphate: step 1/2. Isomerase that catalyzes the conversion of deoxy-ribose 1-phosphate (dRib-1-P) and ribose 1-phosphate (Rib-1-P) to deoxy-ribose 5-phosphate (dRib-5-P) and ribose 5-phosphate (Rib-5-P), respectively. The sequence is that of Phosphopentomutase from Buchnera aphidicola subsp. Schizaphis graminum (strain Sg).